Here is a 197-residue protein sequence, read N- to C-terminus: HTH-type transcriptional regulator BetI (197 aa).

Positions Pro8 to Leu68 constitute an HTH tetR-type domain. The segment at residues Ser31 to Phe50 is a DNA-binding region (H-T-H motif).

The protein operates within amine and polyamine biosynthesis; betaine biosynthesis via choline pathway [regulation]. In terms of biological role, repressor involved in the biosynthesis of the osmoprotectant glycine betaine. It represses transcription of the choline transporter BetT and the genes of BetAB involved in the synthesis of glycine betaine. This chain is HTH-type transcriptional regulator BetI, found in Pseudomonas fluorescens (strain SBW25).